Here is a 116-residue protein sequence, read N- to C-terminus: Distal membrane-arm assembly complex protein 1 (116 aa).

The interval 1 to 39 (MGSRLSQPFESYITAPPGTAAAPAKPAPPATPGAPTSPA) is disordered. Positions 14-24 (TAPPGTAAAPA) are enriched in low complexity. 2 consecutive transmembrane segments (helical) span residues 52–69 (VLSGLGLMGAGGYVYWVA) and 82–104 (WTITQMVIGLSENQGIATWGIVV).

In terms of assembly, interacts with incompletely assembled mitochondrial NADH:ubiquinone oxidoreductase complex (complex I).

The protein localises to the mitochondrion inner membrane. In terms of biological role, required for the assembly of the mitochondrial NADH:ubiquinone oxidoreductase complex (complex I). Involved in the assembly of the distal region of complex I. In Homo sapiens (Human), this protein is Distal membrane-arm assembly complex protein 1.